Reading from the N-terminus, the 231-residue chain is Cytidylate kinase (231 aa).

12-20 (GPSGAGKGT) serves as a coordination point for ATP.

Belongs to the cytidylate kinase family. Type 1 subfamily.

The protein resides in the cytoplasm. It catalyses the reaction CMP + ATP = CDP + ADP. The catalysed reaction is dCMP + ATP = dCDP + ADP. In Shewanella amazonensis (strain ATCC BAA-1098 / SB2B), this protein is Cytidylate kinase.